Here is a 122-residue protein sequence, read N- to C-terminus: U19-hexatoxin-Hi1a (122 aa).

Positions 1–18 (MNTMIGFIVLLVSATVLG) are cleaved as a signal peptide. A propeptide spanning residues 19-80 (DPELDALRKE…YENSNFREKR (62 aa)) is cleaved from the precursor. Disulfide bonds link Cys-81-Cys-96, Cys-88-Cys-101, and Cys-95-Cys-116.

As to expression, expressed by the venom gland.

It localises to the secreted. Probable ion channel inhibitor. The chain is U19-hexatoxin-Hi1a from Hadronyche infensa (Fraser island funnel-web spider).